A 255-amino-acid polypeptide reads, in one-letter code: Short chain dehydrogenase adrF (255 aa).

NADP(+) is bound by residues Ile11, Arg118, Tyr150, Lys154, and Val183. Residue Tyr150 is the Proton acceptor of the active site. Catalysis depends on Lys154, which acts as the Lowers pKa of active site Tyr.

It belongs to the short-chain dehydrogenases/reductases (SDR) family.

It functions in the pathway secondary metabolite biosynthesis; terpenoid biosynthesis. Short chain dehydrogenase; part of the gene cluster that mediates the biosynthesis of andrastins, meroterpenoid compounds that exhibit inhibitory activity against ras farnesyltransferase, suggesting that they could be promising leads for antitumor agents. The first step of the pathway is the synthesis of 3,5-dimethylorsellinic acid (DMOA) by the polyketide synthase adrD via condensation of one acetyl-CoA starter unit with 3 malonyl-CoA units and 2 methylations. DMAO is then converted to farnesyl-DMAO by the prenyltransferase adrG. The methyltransferase adrK catalyzes the methylation of the carboxyl group of farnesyl-DMAO to farnesyl-DMAO methyl ester which is further converted to epoxyfarnesyl-DMAO methyl ester by the FAD-dependent monooxygenase adrH. The terpene cyclase adrI then catalyzes the carbon skeletal rearrangement to generate the andrastin E, the first compound in the pathway having the andrastin scaffold, with the tetracyclic ring system. The post-cyclization tailoring enzymes adrF, adrE, adrJ, and adrA, are involved in the conversion of andrastin E into andrastin A. The short chain dehydrogenase adrF is responsible for the oxidation of the C-3 a hydroxyl group of andrastin E to yield the corresponding ketone, andrastin D. The ketoreductase adrE stereoselectively reduces the carbonyl moiety to reverse the stereochemistry of the C-3 position to yield andrastin F. The acetyltransferase adrJ is the acetyltransferase that attaches the acetyl group to the C-3 hydroxyl group of andrastin F to yield andrastin C. Finally, the cytochrome P450 monooxygenase adrA catalyzes two sequential oxidation reactions of the C-23 methyl group, to generate the corresponding alcohol andrastin B, and aldehyde andrastin A. In Penicillium rubens (strain ATCC 28089 / DSM 1075 / NRRL 1951 / Wisconsin 54-1255) (Penicillium chrysogenum), this protein is Short chain dehydrogenase adrF.